The chain runs to 426 residues: Tyrosine--tRNA ligase (426 aa).

Tyr-38 provides a ligand contact to L-tyrosine. The 'HIGH' region signature appears at 43-52; sequence PTADSLHIGS. Residues Tyr-176 and Gln-180 each contribute to the L-tyrosine site. A 'KMSKS' region motif is present at residues 236 to 240; the sequence is KFGKT. Position 239 (Lys-239) interacts with ATP. The region spanning 359-426 is the S4 RNA-binding domain; that stretch reads QTIVEVLTQS…KKLFNLYIWK (68 aa).

Belongs to the class-I aminoacyl-tRNA synthetase family. TyrS type 1 subfamily. Homodimer.

It is found in the cytoplasm. The catalysed reaction is tRNA(Tyr) + L-tyrosine + ATP = L-tyrosyl-tRNA(Tyr) + AMP + diphosphate + H(+). Catalyzes the attachment of tyrosine to tRNA(Tyr) in a two-step reaction: tyrosine is first activated by ATP to form Tyr-AMP and then transferred to the acceptor end of tRNA(Tyr). The sequence is that of Tyrosine--tRNA ligase from Aliivibrio fischeri (strain ATCC 700601 / ES114) (Vibrio fischeri).